We begin with the raw amino-acid sequence, 374 residues long: Ribonuclease D (374 aa).

The region spanning 3-171 (YQLITTDDGL…MAIRLVEETT (169 aa)) is the 3'-5' exonuclease domain. The region spanning 210–289 (KGRHLACLQK…AETQTMDAAE (80 aa)) is the HRDC domain.

This sequence belongs to the RNase D family. A divalent metal cation is required as a cofactor.

The protein localises to the cytoplasm. It catalyses the reaction Exonucleolytic cleavage that removes extra residues from the 3'-terminus of tRNA to produce 5'-mononucleotides.. In terms of biological role, exonuclease involved in the 3' processing of various precursor tRNAs. Initiates hydrolysis at the 3'-terminus of an RNA molecule and releases 5'-mononucleotides. The polypeptide is Ribonuclease D (Musicola paradisiaca (strain Ech703) (Dickeya paradisiaca)).